A 501-amino-acid chain; its full sequence is Amidophosphoribosyltransferase (501 aa).

C2 acts as the Nucleophile in catalysis. The region spanning 2–234 (CGIVGIVGKS…PGEAVYITEE (233 aa)) is the Glutamine amidotransferase type-2 domain. Mg(2+) is bound by residues T303, D365, and D366.

It in the C-terminal section; belongs to the purine/pyrimidine phosphoribosyltransferase family. Requires Mg(2+) as cofactor.

It carries out the reaction 5-phospho-beta-D-ribosylamine + L-glutamate + diphosphate = 5-phospho-alpha-D-ribose 1-diphosphate + L-glutamine + H2O. It participates in purine metabolism; IMP biosynthesis via de novo pathway; N(1)-(5-phospho-D-ribosyl)glycinamide from 5-phospho-alpha-D-ribose 1-diphosphate: step 1/2. Catalyzes the formation of phosphoribosylamine from phosphoribosylpyrophosphate (PRPP) and glutamine. This chain is Amidophosphoribosyltransferase, found in Pseudomonas aeruginosa (strain ATCC 15692 / DSM 22644 / CIP 104116 / JCM 14847 / LMG 12228 / 1C / PRS 101 / PAO1).